A 252-amino-acid polypeptide reads, in one-letter code: Imidazole glycerol phosphate synthase subunit HisF (252 aa).

Active-site residues include aspartate 11 and aspartate 130.

The protein belongs to the HisA/HisF family. In terms of assembly, heterodimer of HisH and HisF.

It is found in the cytoplasm. It carries out the reaction 5-[(5-phospho-1-deoxy-D-ribulos-1-ylimino)methylamino]-1-(5-phospho-beta-D-ribosyl)imidazole-4-carboxamide + L-glutamine = D-erythro-1-(imidazol-4-yl)glycerol 3-phosphate + 5-amino-1-(5-phospho-beta-D-ribosyl)imidazole-4-carboxamide + L-glutamate + H(+). It participates in amino-acid biosynthesis; L-histidine biosynthesis; L-histidine from 5-phospho-alpha-D-ribose 1-diphosphate: step 5/9. IGPS catalyzes the conversion of PRFAR and glutamine to IGP, AICAR and glutamate. The HisF subunit catalyzes the cyclization activity that produces IGP and AICAR from PRFAR using the ammonia provided by the HisH subunit. The chain is Imidazole glycerol phosphate synthase subunit HisF from Staphylococcus aureus (strain USA300).